An 838-amino-acid chain; its full sequence is Sec1 family domain-containing protein MIP3 (838 aa).

The segment at 637–677 (KSEETKEIPSDDQLDIDALDDDPWGKWGDEEEEEVDNSKAD) is disordered. Over residues 646–658 (SDDQLDIDALDDD) the composition is skewed to acidic residues.

It belongs to the STXBP/unc-18/SEC1 family. In terms of assembly, forms a complex with MAG2, ZW10/MIP1 and MIP2 on the endoplasmic reticulum.

It localises to the endoplasmic reticulum membrane. In terms of biological role, required for proper maturation of seed storage proteins. Forms a complex with MAG2, ZW10/MIP1 and MIP2 on the endoplasmic reticulum that may be responsible for efficient transport of seed storage proteins. The protein is Sec1 family domain-containing protein MIP3 of Arabidopsis thaliana (Mouse-ear cress).